Reading from the N-terminus, the 2193-residue chain is Non-reducing polyketide synthase esdpA (2193 aa).

The region spanning 90–252 is the Starter acyltransferase (SAT) domain; that stretch reads NVLLAPLTVL…AKVQVNGRYH (163 aa). One can recognise a Ketosynthase family 3 (KS3) domain in the interval 381–797; it reads DECVAIVGAA…GNNTVIIVCE (417 aa). Catalysis depends on for beta-ketoacyl synthase activity residues Cys-546, His-682, and His-720. The Malonyl-CoA:ACP transacylase (MAT) domain occupies 906 to 1158; the sequence is VFSGQSGMTV…YFVDAVRRIK (253 aa). Ser-992 acts as the For acyl/malonyl transferase activity in catalysis. The N-terminal hotdog fold stretch occupies residues 1265-1392; it reads PPMLSLENFS…GRVVLEDRRR (128 aa). The PKS/mFAS DH domain maps to 1265–1569; that stretch reads PPMLSLENFS…FVKISSHILQ (305 aa). A C-terminal hotdog fold region spans residues 1419–1569; sequence VFSASGSIAY…FVKISSHILQ (151 aa). The active-site Proton donor; for dehydratase activity is the Asp-1479. Positions 1723 to 1799 constitute a Carrier domain; it reads RILSDSMIKL…ELHDLMQSHP (77 aa). Ser-1759 is subject to O-(pantetheine 4'-phosphoryl)serine. The segment at 1944–2177 is methyltransferase (CMeT) domain; that stretch reads YHGSEHKLLR…GFTHVDWSND (234 aa).

Requires pantetheine 4'-phosphate as cofactor.

Its pathway is secondary metabolite biosynthesis; terpenoid biosynthesis. In terms of biological role, non-reducing polyketide synthase; part of the cluster that mediates the biosynthesis of shearones, diterpenoid pyrones (DPs) which are structurally diverse meroterpenoids consisting of a diterpene linked by a pyrone, and which may exhibit a range of bioactivities. Whitin the pathway, esdpA takes part to the biosynthesis of the molecular scaffold via the production of the alpha-pyrone from one molecule of acetyl-CoA, two molecules of malonyl-CoA and one molecule of S-adenosyl-L-methionine (SAM). The molecular scaffold is commonly biosynthesized by a series of enzymes including the non-reducing polyketide synthase (NR-PKS) esdpA that generates an alpha-pyrone; the prenyltransferase esdpC that attaches a geranylgeranyl pyrophosphate (GGPP) produced by the GGPP synthase (GGPPS) esdpD onto the pyrone unit; the FAD-dependent monooxygenase esdpE that converts an olefin on the diterpene unit into an epoxide; and the terpene cyclase esdpB that catalyzes the cyclization reactions to give the molecular backbone shearone A. In the modification steps, esdpF oxidizes the hydroxy group to a ketone at C-3 and esdpG then attaches hydroxy groups at both C-11 and C-12. After that, esdpI hydroxylates at C-20 and esdpH hydroxylates at C-6'. The ether bridge is generated by nucleophilic attack of the hydroxy group at C-20 to the carbonyl carbon at C-3. EsdpH can also functions prior to esdpI. The different combinations of these modification enzymes lead to the production of diverse shearone derivatives, shearone I being the end product of the pathway. The alpha-ketoglutarate-dependent dioxygenase esdpJ seems not to be involved in this pathway. The polypeptide is Non-reducing polyketide synthase esdpA (Penicillium shearii (Eupenicillium shearii)).